The sequence spans 266 residues: Pre-mRNA-splicing factor PRP11 (266 aa).

Positions 1-21 (MNYLEGVGSKKGGGGIASESQ) are disordered. A Matrin-type zinc finger spans residues 66-96 (LVCKLCNTMHMSWSSVERHLGGKKHGLNVLR).

The protein belongs to the SF3A2 family. In terms of assembly, belongs to the CWC complex (or CEF1-associated complex), a spliceosome sub-complex reminiscent of a late-stage spliceosome composed of the U2, U5 and U6 snRNAs and at least BUD13, BUD31, BRR2, CDC40, CEF1, CLF1, CUS1, CWC2, CWC15, CWC21, CWC22, CWC23, CWC24, CWC25, CWC27, ECM2, HSH155, IST3, ISY1, LEA1, MSL1, NTC20, PRP8, PRP9, PRP11, PRP19, PRP21, PRP22, PRP45, PRP46, SLU7, SMB1, SMD1, SMD2, SMD3, SMX2, SMX3, SNT309, SNU114, SPP2, SYF1, SYF2, RSE1 and YJU2. Interacts with CUS2.

The protein resides in the nucleus. MRNA splicing factors, PRP9, PRP11, and PRP21, are necessary for addition of the U2 snRNP to the pre-mRNA in an early step of spliceosome assembly. This Saccharomyces cerevisiae (strain ATCC 204508 / S288c) (Baker's yeast) protein is Pre-mRNA-splicing factor PRP11 (PRP11).